Reading from the N-terminus, the 576-residue chain is uncharacterized protein (576 aa).

This sequence belongs to the chlamydial CPn_0065/CT_288/TC_0561 family.

This is an uncharacterized protein from Chlamydia pneumoniae (Chlamydophila pneumoniae).